We begin with the raw amino-acid sequence, 147 residues long: MNLTDYVNEVSLEDFAKPFKHHAYWNKRLRTTGGRFFPKDGHLDFNPKMFQEFGQETFRRIVRHELCHYHLYFEGKGYQHKDLDFKRLLKEVDGLRYAPRSTKERGSINYRCQKCGHCYKRQRRINLQKYVCSFCRGHLKEINQSKD.

In terms of domain architecture, SprT-like spans 5–142 (DYVNEVSLED…SFCRGHLKEI (138 aa)). Histidine 64 serves as a coordination point for Zn(2+). Residue glutamate 65 is part of the active site. Histidine 68 is a binding site for Zn(2+).

It belongs to the SprT family. Requires Zn(2+) as cofactor.

The protein resides in the cytoplasm. The polypeptide is Protein SprT-like (Streptococcus uberis (strain ATCC BAA-854 / 0140J)).